The following is a 286-amino-acid chain: Shikimate dehydrogenase (NADP(+)) (286 aa).

Shikimate contacts are provided by residues 19 to 21 (SLS) and threonine 66. Lysine 70 (proton acceptor) is an active-site residue. Residues asparagine 91 and aspartate 107 each coordinate shikimate. NADP(+) is bound by residues 129–133 (GSGGA) and leucine 229. Tyrosine 231 is a shikimate binding site. NADP(+) is bound at residue glycine 252.

It belongs to the shikimate dehydrogenase family. As to quaternary structure, homodimer.

The catalysed reaction is shikimate + NADP(+) = 3-dehydroshikimate + NADPH + H(+). It functions in the pathway metabolic intermediate biosynthesis; chorismate biosynthesis; chorismate from D-erythrose 4-phosphate and phosphoenolpyruvate: step 4/7. Functionally, involved in the biosynthesis of the chorismate, which leads to the biosynthesis of aromatic amino acids. Catalyzes the reversible NADPH linked reduction of 3-dehydroshikimate (DHSA) to yield shikimate (SA). The polypeptide is Shikimate dehydrogenase (NADP(+)) (Prochlorococcus marinus (strain MIT 9312)).